We begin with the raw amino-acid sequence, 547 residues long: Chaperonin GroEL 1 (547 aa).

ATP contacts are provided by residues 30–33 (TLGP), K51, 87–91 (DGTTT), G415, 479–481 (NAA), and D495.

This sequence belongs to the chaperonin (HSP60) family. As to quaternary structure, forms a cylinder of 14 subunits composed of two heptameric rings stacked back-to-back. Interacts with the co-chaperonin GroES.

It is found in the cytoplasm. It carries out the reaction ATP + H2O + a folded polypeptide = ADP + phosphate + an unfolded polypeptide.. Together with its co-chaperonin GroES, plays an essential role in assisting protein folding. The GroEL-GroES system forms a nano-cage that allows encapsulation of the non-native substrate proteins and provides a physical environment optimized to promote and accelerate protein folding. This is Chaperonin GroEL 1 from Vibrio parahaemolyticus serotype O3:K6 (strain RIMD 2210633).